The sequence spans 746 residues: NAD(P)H-quinone oxidoreductase subunit 5, chloroplastic (746 aa).

The next 16 membrane-spanning stretches (helical) occupy residues 9–29 (WIIPFIPLPVPILIGVGLLLF), 40–60 (WAFPSIFLLTIVMIFSIDLSI), 89–109 (IDSLTSIMSILITTVGILVLI), 121–140 (YLRFFTYMSFFNTSMLGLVT), 147–167 (VYIFWELVGMCSYLLIGFWFT), 185–205 (GDFGLLLGILGFYWITGSLEF), 219–239 (NEVNILFVTLCALLLFCGSVA), 258–278 (TPISALIHAATMVAAGIFLVA), 280–300 (LLPLFIVIPSIMSGIALIGII), 327–347 (LGYMMLALGMGSYRAALFHLI), 354–374 (ALLFLGSGSIIHSMEAIVGYS), 396–416 (MSFLIGTLSLCGIPPFACFWS), 425–445 (WLYSPIFAIIACSTAGLTAFY), 552–572 (LFSMLVLVLFTFFVGSIGISF), 606–626 (FFINATFSVSIAFFGLFIASF), and 726–746 (SYIFFFVLIFLLICYYIYLFP).

This sequence belongs to the complex I subunit 5 family. In terms of assembly, NDH is composed of at least 16 different subunits, 5 of which are encoded in the nucleus.

Its subcellular location is the plastid. The protein resides in the chloroplast thylakoid membrane. The enzyme catalyses a plastoquinone + NADH + (n+1) H(+)(in) = a plastoquinol + NAD(+) + n H(+)(out). It carries out the reaction a plastoquinone + NADPH + (n+1) H(+)(in) = a plastoquinol + NADP(+) + n H(+)(out). Functionally, NDH shuttles electrons from NAD(P)H:plastoquinone, via FMN and iron-sulfur (Fe-S) centers, to quinones in the photosynthetic chain and possibly in a chloroplast respiratory chain. The immediate electron acceptor for the enzyme in this species is believed to be plastoquinone. Couples the redox reaction to proton translocation, and thus conserves the redox energy in a proton gradient. The protein is NAD(P)H-quinone oxidoreductase subunit 5, chloroplastic (ndhF) of Vicia faba (Broad bean).